A 606-amino-acid polypeptide reads, in one-letter code: NADH-ubiquinone oxidoreductase chain 5 (606 aa).

The next 14 helical transmembrane spans lie at 1–21 (MNMFSSCMITALVILTLPIIM), 43–63 (AFMISMIPTMMFIYSGQETII), 87–107 (MIFVPVALFVTWSIMEFSMWY), 117–137 (FFKYLLLFLITMMVLVTANNM), 140–160 (LFIGWEGVGIMSFLLIGWWYG), 171–191 (AVLYNRIGDVGFIMTMAWFLL), 241–261 (TPVSALLHSSTMVVAGVFLLI), 273–293 (IQTLTLCLGAITTLFTAICAL), 310–330 (LGLMMVTIGINQPYLAFLHIC), 365–385 (VLPFTTTSLIIGSLALTGMPF), 409–429 (LLITLVATSLTAAYSTRIMFF), 457–477 (LLIGSVFAGYIISHSITPTTI), 488–508 (MTALAVTILGFILALELNLTT), and 582–602 (GLIKLYFLSFMLTMILSLLIL).

The protein belongs to the complex I subunit 5 family. In terms of assembly, core subunit of respiratory chain NADH dehydrogenase (Complex I) which is composed of 45 different subunits.

The protein resides in the mitochondrion inner membrane. The enzyme catalyses a ubiquinone + NADH + 5 H(+)(in) = a ubiquinol + NAD(+) + 4 H(+)(out). Its function is as follows. Core subunit of the mitochondrial membrane respiratory chain NADH dehydrogenase (Complex I) which catalyzes electron transfer from NADH through the respiratory chain, using ubiquinone as an electron acceptor. Essential for the catalytic activity and assembly of complex I. This chain is NADH-ubiquinone oxidoreductase chain 5 (MT-ND5), found in Canis lupus (Gray wolf).